Here is a 304-residue protein sequence, read N- to C-terminus: Large ribosomal subunit protein uL18y (304 aa).

It belongs to the universal ribosomal protein uL18 family. As to quaternary structure, component of the large ribosomal subunit (LSU).

Its subcellular location is the cytoplasm. It is found in the nucleus. Functionally, component of the ribosome, a large ribonucleoprotein complex responsible for the synthesis of proteins in the cell. The small ribosomal subunit (SSU) binds messenger RNAs (mRNAs) and translates the encoded message by selecting cognate aminoacyl-transfer RNA (tRNA) molecules. The large subunit (LSU) contains the ribosomal catalytic site termed the peptidyl transferase center (PTC), which catalyzes the formation of peptide bonds, thereby polymerizing the amino acids delivered by tRNAs into a polypeptide chain. The nascent polypeptides leave the ribosome through a tunnel in the LSU and interact with protein factors that function in enzymatic processing, targeting, and the membrane insertion of nascent chains at the exit of the ribosomal tunnel. This is Large ribosomal subunit protein uL18y (RPL5B) from Oryza sativa subsp. japonica (Rice).